Here is a 295-residue protein sequence, read N- to C-terminus: Nucleotide-binding protein MCA0739 (295 aa).

Gly-8 to Ser-15 is a binding site for ATP. Residue Asp-60–Asn-63 participates in GTP binding.

It belongs to the RapZ-like family.

Functionally, displays ATPase and GTPase activities. In Methylococcus capsulatus (strain ATCC 33009 / NCIMB 11132 / Bath), this protein is Nucleotide-binding protein MCA0739.